The chain runs to 554 residues: MAEAGTGFLEQLKSCIVWSWTYLWTLWFFIMLFLVYILRVPLKINDNLTTVSMFLNTLTPKFYVALTGTSSLISGLILIFEWWYFRKYGTSFIEQVSVSHLRPLLGGVDNSAPSAANAANGEADSSRQSVSECKVWRNPLNLFRGAEYNRYTWVTGREPLTYYDMNLSAQDHQTFFTCDTDHLRPADAIMQKAWRERNPQARISAAHEALELNECATAYILLAEEEATTIVEAEKLFKQALKAGEGCYRRSQQLQHHGAQYEAQHRRDTNVLVYIKRRLAMCARKLGRTREAVKMMRDLMKEFPLLSMFNIHENLLEALLELQAYADVQAVLAKYDDISLPKSATICYTAALLKARAVSDKFSPEAASRRGLSTAEMNAVEAIHRAVEFNPHVPKYLLEMKSLILPPEHILKRGDSEAIAYAFFHLQHWKRVEGALNLLHCTWEGTFRMIPYPLEKGHLFYPYPICTETADRELLPSFHEVSVYPKKELPFFILFTAGLCSFTAMLALLTHQFPELMGVFAKAFLSTLFAPLNFVMEKVESILPSSLWHQLTRI.

A run of 4 helical transmembrane segments spans residues 15-35 (CIVW…LFLV), 62-82 (FYVA…IFEW), 489-509 (LPFF…LALL), and 516-536 (LMGV…NFVM).

This sequence belongs to the ST7 family.

It is found in the membrane. The protein is Suppressor of tumorigenicity 7 protein homolog (ST7) of Gallus gallus (Chicken).